We begin with the raw amino-acid sequence, 94 residues long: Small nuclear ribonucleoprotein E (94 aa).

The Sm domain occupies 14 to 94; sequence INCIFNFLQQ…DNITLITSAD (81 aa).

This sequence belongs to the snRNP Sm proteins family. In terms of assembly, component of the Sm core complex, present in spliceosomal snRNP U1, U2, U4/U6 and U5. The core complex contains SMB1, SMD1, SMD2, SMD3, SME1, SMX3 and SMX2 (Sm proteins B, D1, D2, D3, E, F and G, respectively), and is probably a heptameric ring structure. SME1 specifically interacts with SMX2 and SMX3. Component of the U4/U6-U5 tri-snRNP complex composed of the U4, U6 and U5 snRNAs and at least PRP3, PRP4, PRP6, PRP8, PRP18, PRP31, PRP38, SNU13, SNU23, SNU66, SNU114, SPP381, SMB1, SMD1, SMD2, SMD3, SMX2, SMX3, LSM2, LSM3, LSM4, LSM5, LSM6, LSM7, LSM8, BRR2 and DIB1.

It localises to the cytoplasm. The protein resides in the nucleus. Functionally, involved in pre-mRNA splicing. Binds and is required for the stability of snRNA U1, U2, U4 and U5 which contain a highly conserved structural motif called the Sm binding site. Involved in cap modification. In Saccharomyces cerevisiae (strain ATCC 204508 / S288c) (Baker's yeast), this protein is Small nuclear ribonucleoprotein E (SME1).